Reading from the N-terminus, the 266-residue chain is Phosphatidylglycerol--prolipoprotein diacylglyceryl transferase (266 aa).

The next 7 helical transmembrane spans lie at 10–30 (VALA…LIGI), 56–76 (LVFW…VLFY), 92–112 (WKGG…VWWF), 120–140 (FFQL…AGRI), 171–191 (PSQL…LWLF), 199–219 (ASVS…VEFV), and 233–253 (WLTM…ALMV). Residue Arg139 coordinates a 1,2-diacyl-sn-glycero-3-phospho-(1'-sn-glycerol).

This sequence belongs to the Lgt family.

Its subcellular location is the cell inner membrane. It carries out the reaction L-cysteinyl-[prolipoprotein] + a 1,2-diacyl-sn-glycero-3-phospho-(1'-sn-glycerol) = an S-1,2-diacyl-sn-glyceryl-L-cysteinyl-[prolipoprotein] + sn-glycerol 1-phosphate + H(+). It participates in protein modification; lipoprotein biosynthesis (diacylglyceryl transfer). In terms of biological role, catalyzes the transfer of the diacylglyceryl group from phosphatidylglycerol to the sulfhydryl group of the N-terminal cysteine of a prolipoprotein, the first step in the formation of mature lipoproteins. This chain is Phosphatidylglycerol--prolipoprotein diacylglyceryl transferase, found in Pseudomonas aeruginosa (strain LESB58).